The primary structure comprises 762 residues: MTLFFLTCLLAVFPVVSMKSPIFGPPEIDSVEGTSTSIKCYYPPTSVNRHSRKYWCRQGPKGQCITLISSNGYVSKDYEGRANLTNFPESGTFVVNVDHLIQGDSGSYKCGVGINNRGLSFDVRLRVVPGSGVLNGTQVYAEDLGGKVSISCPFTSANLPNVKSVCKQIADKHCVRVIDSAGYKEPSYEGRAKLIIQGTTQTEFFFIIDQLQVEDDGKYVCQAGDDSSGDKSNVDLHVLKPEPELVYADLGSSVRFDCALGPEVVNVAKFLCQKNKEKTCNLVANTLGQRNQTFKGRILSQNNNGVFSVDITNLRKEDAGLYLCGANSDGQPQKSRPIQAWQLFVNEETTFPSRPSVVKGVVGGSVAVLCPYNPKEVNSVKSWCRWEDTQNGGCPLLVQSTGLVKNQYEQYNGRLVLYDEPGNGTYTVILNQLTAQDAGFYWCLTNGDIHWRSTVELKIVEGQPNLKVPKTVNVELGETVQLTCHSPCKFYSYKKFWCKWTDQGCSALPSQDEGSGQAVVNCDQNSQLINLTLKQVTKGDEGWYWCGVKEGLQYKETVAVYVAVKEKGTGSGALSSVRAAPAEDVIETSVRKVDRKVVQDPRLFVDTQAKDPEDAAGGSIASADPGSSAGQGGSSKVVVSTLVPLALVLALGVLVVGVLRARHRKNVDRISIRSYRTDISMSDFENSRDFGANDNMGASPVSQETTLGGKDEFIATTENTVETEEPKKAKRSSKEEADMAYTAFLLQANNMAANIQDGPSKA.

The signal sequence occupies residues 1-18 (MTLFFLTCLLAVFPVVSM). One can recognise an Ig-like V-type 1; required for binding to polymeric IgA and IgM domain in the interval 19–120 (KSPIFGPPEI…GVGINNRGLS (102 aa)). The Extracellular segment spans residues 19–636 (KSPIFGPPEI…SSAGQGGSSK (618 aa)). Cystine bridges form between Cys-40–Cys-110 and Cys-56–Cys-64. N-linked (GlcNAc...) asparagine glycosylation is found at Asn-83 and Asn-135. Ig-like V-type domains follow at residues 145–238 (GGKV…DLHV), 251–351 (GSSV…ETTF), 363–460 (GGSV…LKIV), and 464–563 (PNLK…VYVA). 8 disulfide bridges follow: Cys-152–Cys-221, Cys-258–Cys-324, Cys-272–Cys-280, Cys-370–Cys-443, Cys-384–Cys-394, Cys-484–Cys-546, Cys-488–Cys-522, and Cys-498–Cys-505. Asn-291 carries N-linked (GlcNAc...) asparagine glycosylation. Asn-423 carries N-linked (GlcNAc...) asparagine glycosylation. Residue Asn-530 is glycosylated (N-linked (GlcNAc...) asparagine). The segment at 604 to 634 (FVDTQAKDPEDAAGGSIASADPGSSAGQGGS) is disordered. Residues 637–659 (VVVSTLVPLALVLALGVLVVGVL) form a helical membrane-spanning segment. The Cytoplasmic segment spans residues 660–762 (RARHRKNVDR…ANIQDGPSKA (103 aa)).

As to quaternary structure, interacts (mainly via CDR1-like domain) with dimeric IgA. Interacts (mainly via CDR2-like domain) with pentameric IgM. In terms of assembly, either free or part of the secretory IgA (sIgA) complex that consists of two, four or five IgA monomers, and two additional non-Ig polypeptides, namely the JCHAIN and the secretory component (the proteolytic product of PIGR). Free secretory component interacts with bacterial antigens toxA of C.difficile and eae of E.coli. N-glycosylated. Carries predominantly biantennary complex type glycans which are largely non-fucosylated. Sialylation with NeuAc is common, except for Asn-291 which carries exclusively high mannose glycans. N-glycans attached to Asn-83: Gal2GlcNAc2Man3GlcNAc2; Gal2GlcNAc2Man3GlcNAc2(Fuc); Gal1GlcNAc1Man4GlcNAc2(Fuc); Gal1GlcNAc1Man3GlcNAc2; Gal1GlcNAc1Man4GlcNAc2 and NeuAc1Gal2GlcNAc2Man3GlcNAc2. N-glycans attached to Asn-135: Gal2GlcNAc2Man3GlcNAc2; Gal1GlcNAc1Man3GlcNAc2 and NeuAc1Gal2GlcNAc2Man3GlcNAc2. N-glycans attached to Asn-291: Man5-8GlcNAc2. N-glycans attached to Asn-423: NeuAc1Gal2GlcNAc2Man3GlcNAc2. N-glycans attached to Asn-530: Gal2GlcNAc2Man3GlcNAc2; Gal1GlcNAc1Man3GlcNAc2 and NeuAc1Gal2GlcNAc2Man3GlcNAc2. N-glycosylation is required for anchoring IgA molecules to mucus but is not necessary for Ig binding.

Its subcellular location is the cell membrane. It is found in the secreted. Mediates selective transcytosis of polymeric IgA and IgM across mucosal epithelial cells. Binds polymeric IgA and IgM at the basolateral surface of epithelial cells. The complex is then transported across the cell to be secreted at the apical surface. During this process, a cleavage occurs that separates the extracellular (known as the secretory component) from the transmembrane segment. In terms of biological role, through its N-linked glycans ensures anchoring of secretory IgA (sIgA) molecules to mucus lining the epithelial surface to neutralize extracellular pathogens. On its own (free form) may act as a non-specific microbial scavenger to prevent pathogen interaction with epithelial cells. This chain is Polymeric immunoglobulin receptor (PIGR), found in Equus asinus (Donkey).